We begin with the raw amino-acid sequence, 363 residues long: Protein RecA (363 aa).

An ATP-binding site is contributed by 79-86; it reads GPESSGKT.

It belongs to the RecA family.

Its subcellular location is the cytoplasm. In terms of biological role, can catalyze the hydrolysis of ATP in the presence of single-stranded DNA, the ATP-dependent uptake of single-stranded DNA by duplex DNA, and the ATP-dependent hybridization of homologous single-stranded DNAs. It interacts with LexA causing its activation and leading to its autocatalytic cleavage. The sequence is that of Protein RecA from Methylobacterium sp. (strain 4-46).